A 286-amino-acid chain; its full sequence is MQILNGKETALTIREELKVEIDGLKEKHGRAPGLAVILVGEDPASQVYVRNKEIACEKAGIVSTAHRIDASVSQEELEALIQKLNADDTIDGILLQLPLPKGLDSQRCLELIDPGKDVDGFHPMNVGKLMLGLPGFRSCTPAGIITLLERYNLPTSGKKAVVVGRSNIVGKPLAMMLMQYGDFANATVTVCHSRTDNLAEEVKAADFVFAAIGIPKFIKKEMVKDGAVVVDVGINRTDEGLVGDCDYAALEDVASAMTPVPGGVGPMTIAQLLINTVQAYKEHVGA.

NADP(+)-binding positions include glycine 164 to serine 166, serine 193, and isoleucine 234.

The protein belongs to the tetrahydrofolate dehydrogenase/cyclohydrolase family. Homodimer.

It catalyses the reaction (6R)-5,10-methylene-5,6,7,8-tetrahydrofolate + NADP(+) = (6R)-5,10-methenyltetrahydrofolate + NADPH. The catalysed reaction is (6R)-5,10-methenyltetrahydrofolate + H2O = (6R)-10-formyltetrahydrofolate + H(+). The protein operates within one-carbon metabolism; tetrahydrofolate interconversion. Functionally, catalyzes the oxidation of 5,10-methylenetetrahydrofolate to 5,10-methenyltetrahydrofolate and then the hydrolysis of 5,10-methenyltetrahydrofolate to 10-formyltetrahydrofolate. The polypeptide is Bifunctional protein FolD (Maridesulfovibrio salexigens (strain ATCC 14822 / DSM 2638 / NCIMB 8403 / VKM B-1763) (Desulfovibrio salexigens)).